Consider the following 374-residue polypeptide: tRNA-specific 2-thiouridylase MnmA (374 aa).

Residues 12–19 (GMSGGVDS) and Met-38 contribute to the ATP site. An interaction with target base in tRNA region spans residues 98–100 (NPD). Cys-103 serves as the catalytic Nucleophile. Residues Cys-103 and Cys-200 are joined by a disulfide bond. Gly-127 lines the ATP pocket. The segment at 150 to 152 (KDQ) is interaction with tRNA. Cys-200 functions as the Cysteine persulfide intermediate in the catalytic mechanism. An interaction with tRNA region spans residues 311 to 312 (RY).

Belongs to the MnmA/TRMU family.

It is found in the cytoplasm. The enzyme catalyses S-sulfanyl-L-cysteinyl-[protein] + uridine(34) in tRNA + AH2 + ATP = 2-thiouridine(34) in tRNA + L-cysteinyl-[protein] + A + AMP + diphosphate + H(+). Functionally, catalyzes the 2-thiolation of uridine at the wobble position (U34) of tRNA, leading to the formation of s(2)U34. This chain is tRNA-specific 2-thiouridylase MnmA, found in Enterococcus faecalis (strain ATCC 700802 / V583).